A 155-amino-acid polypeptide reads, in one-letter code: Immunoglobulin domain-containing protein oig-4 (155 aa).

The N-terminal stretch at 1-22 (MSFRLWGRCIFFFCFLLEAIDS) is a signal peptide. 2 N-linked (GlcNAc...) asparagine glycosylation sites follow: Asn-55 and Asn-114. One can recognise an Ig-like C2-type domain in the interval 73-154 (GYKLLIICKA…MAKNFKAEYT (82 aa)). Cysteines 80 and 136 form a disulfide.

In terms of assembly, interacts with the non-alpha subunit of nicotinic acetylcholine receptor unc-29 and lev-10 to stabilize the complex formed between unc-29 and lev-10. Expressed in body wall muscle cells, the pharyngeal muscle cell pm6 and in four head neurons.

The protein localises to the synapse. It is found in the secreted. Required for the localization of acetylcholine receptors at neuromuscular junctions and for subsequently controlling the response evoked by receptor stimulation. This chain is Immunoglobulin domain-containing protein oig-4, found in Caenorhabditis elegans.